The primary structure comprises 121 residues: Apoptin (121 aa).

2 disordered regions span residues 1–28 and 57–121; these read MNAL…LETP and LRSA…CIRL. Residues 58 to 70 show a composition bias toward polar residues; the sequence is RSATADNSESTGF. A compositionally biased stretch (basic and acidic residues) spans 88 to 102; it reads RSCDPSEYRVSELKE.

The protein belongs to the gyrovirus apoptin family.

The protein localises to the host nucleus. Its function is as follows. May act as transcriptional regulator. Induces apoptosis in infected cells. Element of infectious replication cycle. The sequence is that of Apoptin (VP3) from Gallus gallus (Chicken).